Here is a 600-residue protein sequence, read N- to C-terminus: Molybdenum cofactor biosynthesis protein moc-5 (600 aa).

The segment at 4–371 is molybdenum cofactor biosynthesis protein A; sequence RAGKKLFQWS…AVNNKKARHA (368 aa). A Radical SAM core domain is found at 68 to 284; that stretch reads MFMREHTYLR…VDKYGDGVIR (217 aa). A GTP-binding site is contributed by R77. [4Fe-4S] cluster contacts are provided by C84 and C88. Y90 serves as a coordination point for S-adenosyl-L-methionine. C91 serves as a coordination point for [4Fe-4S] cluster. A GTP-binding site is contributed by R127. An S-adenosyl-L-methionine-binding site is contributed by G131. GTP is bound at residue T158. S182 lines the S-adenosyl-L-methionine pocket. K218 serves as a coordination point for GTP. Residue M252 participates in S-adenosyl-L-methionine binding. [4Fe-4S] cluster is bound by residues C316 and C319. A GTP-binding site is contributed by 321 to 323; the sequence is RLR. [4Fe-4S] cluster is bound at residue C333. The interval 369-390 is disordered; that stretch reads RHAVFRNGRSEEPAKSSNDSYR. The interval 396–595 is molybdenum cofactor biosynthesis protein C; the sequence is TSASSILVHL…SGGKTTYTID (200 aa). Catalysis depends on D566, which acts as the For molybdenum cofactor biosynthesis protein C activity.

The protein in the C-terminal section; belongs to the MoaC family. It in the N-terminal section; belongs to the radical SAM superfamily. MoaA family. Isoform a and isoform b probably form a heterooligomer. The cofactor is [4Fe-4S] cluster.

It catalyses the reaction GTP + AH2 + S-adenosyl-L-methionine = (8S)-3',8-cyclo-7,8-dihydroguanosine 5'-triphosphate + 5'-deoxyadenosine + L-methionine + A + H(+). It carries out the reaction (8S)-3',8-cyclo-7,8-dihydroguanosine 5'-triphosphate = cyclic pyranopterin phosphate + diphosphate. Its pathway is cofactor biosynthesis; molybdopterin biosynthesis. Its function is as follows. Probably forms a complex with isoform b that catalyzes the conversion of 5'-GTP to cyclic pyranopterin monophosphate (cPMP). Catalyzes the cyclization of GTP to (8S)-3',8-cyclo-7,8-dihydroguanosine 5'-triphosphate and mocs1b catalyzes the subsequent conversion of (8S)-3',8-cyclo-7,8-dihydroguanosine 5'-triphosphate to cPMP. Probably forms a complex with isoform a that catalyzes the conversion of 5'-GTP to cyclic pyranopterin monophosphate (cPMP). The chain is Molybdenum cofactor biosynthesis protein moc-5 from Caenorhabditis elegans.